The chain runs to 179 residues: Large ribosomal subunit protein uL5 (179 aa).

Belongs to the universal ribosomal protein uL5 family. Part of the 50S ribosomal subunit; part of the 5S rRNA/L5/L18/L25 subcomplex. Contacts the 5S rRNA and the P site tRNA. Forms a bridge to the 30S subunit in the 70S ribosome.

Its function is as follows. This is one of the proteins that bind and probably mediate the attachment of the 5S RNA into the large ribosomal subunit, where it forms part of the central protuberance. In the 70S ribosome it contacts protein S13 of the 30S subunit (bridge B1b), connecting the 2 subunits; this bridge is implicated in subunit movement. Contacts the P site tRNA; the 5S rRNA and some of its associated proteins might help stabilize positioning of ribosome-bound tRNAs. The protein is Large ribosomal subunit protein uL5 of Saccharophagus degradans (strain 2-40 / ATCC 43961 / DSM 17024).